A 258-amino-acid chain; its full sequence is UPF0246 protein VP0504 (258 aa).

This sequence belongs to the UPF0246 family.

The polypeptide is UPF0246 protein VP0504 (Vibrio parahaemolyticus serotype O3:K6 (strain RIMD 2210633)).